The chain runs to 365 residues: 2-aminoethylphosphonate--pyruvate transaminase (365 aa).

N6-(pyridoxal phosphate)lysine is present on Lys194.

It belongs to the class-V pyridoxal-phosphate-dependent aminotransferase family. PhnW subfamily. As to quaternary structure, homodimer. The cofactor is pyridoxal 5'-phosphate.

It catalyses the reaction (2-aminoethyl)phosphonate + pyruvate = phosphonoacetaldehyde + L-alanine. In terms of biological role, involved in phosphonate degradation. In Bacillus cereus (strain Q1), this protein is 2-aminoethylphosphonate--pyruvate transaminase.